Consider the following 342-residue polypeptide: Probable dual-specificity RNA methyltransferase RlmN (342 aa).

Glu91 functions as the Proton acceptor in the catalytic mechanism. The region spanning 97 to 327 is the Radical SAM core domain; it reads YKHGNSICVS…TTIRREMGAD (231 aa). Cys104 and Cys332 are joined by a disulfide. Cys111, Cys115, and Cys118 together coordinate [4Fe-4S] cluster. Residues 158–159, Ser190, 213–215, and Asn289 each bind S-adenosyl-L-methionine; these read GE and SLH. Cys332 acts as the S-methylcysteine intermediate in catalysis.

Belongs to the radical SAM superfamily. RlmN family. The cofactor is [4Fe-4S] cluster.

Its subcellular location is the cytoplasm. The enzyme catalyses adenosine(2503) in 23S rRNA + 2 reduced [2Fe-2S]-[ferredoxin] + 2 S-adenosyl-L-methionine = 2-methyladenosine(2503) in 23S rRNA + 5'-deoxyadenosine + L-methionine + 2 oxidized [2Fe-2S]-[ferredoxin] + S-adenosyl-L-homocysteine. It carries out the reaction adenosine(37) in tRNA + 2 reduced [2Fe-2S]-[ferredoxin] + 2 S-adenosyl-L-methionine = 2-methyladenosine(37) in tRNA + 5'-deoxyadenosine + L-methionine + 2 oxidized [2Fe-2S]-[ferredoxin] + S-adenosyl-L-homocysteine. Specifically methylates position 2 of adenine 2503 in 23S rRNA and position 2 of adenine 37 in tRNAs. In Clostridium botulinum (strain Langeland / NCTC 10281 / Type F), this protein is Probable dual-specificity RNA methyltransferase RlmN.